Reading from the N-terminus, the 330-residue chain is Lysophospholipase D GDPD3 (330 aa).

Residue methionine 1 is a topological domain, cytoplasmic. A helical transmembrane segment spans residues 2-22 (IPLLYFVLPTLGSYVMLSIFF). At 23 to 200 (LRRPHLLHTP…ANPEMPMAFT (178 aa)) the chain is on the extracellular side. One can recognise a GP-PDE domain in the interval 39 to 308 (IRLAAHRGGS…DYPTALRHYL (270 aa)). The a divalent metal cation site is built by glutamate 71, aspartate 73, and histidine 86. The helical transmembrane segment at 201 to 221 (IWRSFWILLLYYLGLLPFVSI) threads the bilayer. At 222–330 (PEKFFFCFLP…EALSCLSLKK (109 aa)) the chain is on the cytoplasmic side. The segment at 311–330 (QEEETQPPQPEALSCLSLKK) is disordered.

Belongs to the glycerophosphoryl diester phosphodiesterase family. Highly expressed in stomach and kidney. In stomach detected in the glandular epithelium. Predominantly expressed in the stomach (at protein level).

The protein localises to the membrane. It is found in the cytoplasm. Its subcellular location is the perinuclear region. It localises to the endoplasmic reticulum membrane. The catalysed reaction is 1-hexadecanoyl-sn-glycero-3-phosphocholine + H2O = 1-hexadecanoyl-sn-glycero-3-phosphate + choline + H(+). It carries out the reaction 1-O-hexadecyl-sn-glycero-3-phosphocholine + H2O = 1-O-hexadecyl-sn-glycero-3-phosphate + choline + H(+). The enzyme catalyses 1-O-(1Z-octadecenyl)-sn-glycero-3-phospho-N-hexadecanoyl-ethanolamine + H2O = 1-O-(1Z-octadecenyl)-sn-glycero-3-phosphate + N-hexadecanoylethanolamine + H(+). It catalyses the reaction N-(5Z,8Z,11Z,14Z-eicosatetraenoyl)-1-(9Z-octadecenoyl)-sn-glycero-3-phosphoethanolamine + H2O = N-(5Z,8Z,11Z,14Z-eicosatetraenoyl)-ethanolamine + 1-(9Z-octadecenoyl)-sn-glycero-3-phosphate + H(+). The catalysed reaction is N,1-di-(9Z-octadecenoyl)-sn-glycero-3-phosphoethanolamine + H2O = N-(9Z-octadecenoyl) ethanolamine + 1-(9Z-octadecenoyl)-sn-glycero-3-phosphate + H(+). It carries out the reaction N-hexadecanoyl-1-(9Z-octadecenoyl)-sn-glycero-3-phosphoethanolamine + H2O = N-hexadecanoylethanolamine + 1-(9Z-octadecenoyl)-sn-glycero-3-phosphate + H(+). The enzyme catalyses 1-hexadecanoyl-sn-glycero-3-phosphocholine + H2O = sn-glycerol 3-phosphocholine + hexadecanoate + H(+). Its activity is regulated as follows. Lysophospholipase D activity is stimulated by calcium. Loss of lysophospholipase D activity in presence of EDTA. In terms of biological role, hydrolyzes lysoglycerophospholipids to produce lysophosphatidic acid (LPA) and the corresponding amines. Shows a preference for 1-O-alkyl-sn-glycero-3-phosphocholine (lyso-PAF), lysophosphatidylcholine (lyso-PC) and N-acylethanolamine lysophospholipids. Does not display glycerophosphodiester phosphodiesterase activity, since it cannot hydrolyze either glycerophosphoinositol or glycerophosphocholine. The protein is Lysophospholipase D GDPD3 of Mus musculus (Mouse).